The following is a 309-amino-acid chain: Aurora kinase C (309 aa).

The segment at 1 to 33 (MSSPRAVVQLGKAQPAGEELATANQTAQQPSSP) is disordered. Residues 22–32 (TANQTAQQPSS) show a composition bias toward polar residues. Positions 43-293 (FEIGRPLGKG…LAQILKHPWV (251 aa)) constitute a Protein kinase domain. ATP-binding positions include 49 to 57 (LGKGKFGNV) and Lys-72. Asp-166 serves as the catalytic Proton acceptor. Thr-198 carries the phosphothreonine; by PKA modification. Residues 292-309 (WVQAHSRRVLPPCAQMAS) form an interaction with BIRC5 region.

It belongs to the protein kinase superfamily. Ser/Thr protein kinase family. Aurora subfamily. Component of the chromosomal passenger complex (CPC) composed of at least BIRC5/survivin, CDCA8/borealin, INCENP, AURKB or AURKC; predominantly independent AURKB- and AURKC-containing complexes exist; in the complex interacts directly with BIRC5/survivin and INCENP. Interacts with TACC1. Isoform 1 and isoform 2 are expressed in testis. Elevated expression levels were seen only in a subset of cancer cell lines such as Hep-G2, Huh-7 and HeLa. Expression is maximum at M phase.

The protein localises to the nucleus. It is found in the chromosome. The protein resides in the centromere. Its subcellular location is the cytoplasm. It localises to the cytoskeleton. The protein localises to the spindle. It catalyses the reaction L-seryl-[protein] + ATP = O-phospho-L-seryl-[protein] + ADP + H(+). The enzyme catalyses L-threonyl-[protein] + ATP = O-phospho-L-threonyl-[protein] + ADP + H(+). Its activity is regulated as follows. Okadaic acid, an inhibitor of protein phosphatase 1 (PP1), protein phosphatase 2A (PP2A) and protein phosphatase 5 (PP5), increases AURKC activity. AURKC is also stabilized through its interaction with INCENP, which also acts as an activator. Serine/threonine-protein kinase component of the chromosomal passenger complex (CPC), a complex that acts as a key regulator of mitosis. The CPC complex has essential functions at the centromere in ensuring correct chromosome alignment and segregation and is required for chromatin-induced microtubule stabilization and spindle assembly. Also plays a role in meiosis and more particularly in spermatogenesis. Has redundant cellular functions with AURKB and can rescue an AURKB knockdown. Like AURKB, AURKC phosphorylates histone H3 at 'Ser-10' and 'Ser-28'. AURKC phosphorylates the CPC complex subunits BIRC5/survivin and INCENP leading to increased AURKC activity. Phosphorylates TACC1, another protein involved in cell division, at 'Ser-228'. The sequence is that of Aurora kinase C (AURKC) from Homo sapiens (Human).